The primary structure comprises 293 residues: 4-diphosphocytidyl-2-C-methyl-D-erythritol kinase (293 aa).

K10 is a catalytic residue. 94 to 104 lines the ATP pocket; that stretch reads PVSAGLAGGSS. D136 is a catalytic residue.

It belongs to the GHMP kinase family. IspE subfamily.

It carries out the reaction 4-CDP-2-C-methyl-D-erythritol + ATP = 4-CDP-2-C-methyl-D-erythritol 2-phosphate + ADP + H(+). The protein operates within isoprenoid biosynthesis; isopentenyl diphosphate biosynthesis via DXP pathway; isopentenyl diphosphate from 1-deoxy-D-xylulose 5-phosphate: step 3/6. Catalyzes the phosphorylation of the position 2 hydroxy group of 4-diphosphocytidyl-2C-methyl-D-erythritol. The polypeptide is 4-diphosphocytidyl-2-C-methyl-D-erythritol kinase (Listeria monocytogenes serotype 4b (strain CLIP80459)).